Here is a 277-residue protein sequence, read N- to C-terminus: Orotidine 5'-phosphate decarboxylase (277 aa).

Substrate-binding positions include aspartate 40, 62–64, 93–102, tyrosine 229, and arginine 247; these read KTH and DRKFIDIGNT. Lysine 95 serves as the catalytic Proton donor.

This sequence belongs to the OMP decarboxylase family.

It catalyses the reaction orotidine 5'-phosphate + H(+) = UMP + CO2. It functions in the pathway pyrimidine metabolism; UMP biosynthesis via de novo pathway; UMP from orotate: step 2/2. This is Orotidine 5'-phosphate decarboxylase (pyrG) from Aspergillus oryzae (strain ATCC 42149 / RIB 40) (Yellow koji mold).